A 197-amino-acid polypeptide reads, in one-letter code: Nucleoside triphosphate pyrophosphatase (197 aa).

The Proton acceptor role is filled by Asp-70.

This sequence belongs to the Maf family. It depends on a divalent metal cation as a cofactor.

The protein localises to the cytoplasm. The enzyme catalyses a ribonucleoside 5'-triphosphate + H2O = a ribonucleoside 5'-phosphate + diphosphate + H(+). It catalyses the reaction a 2'-deoxyribonucleoside 5'-triphosphate + H2O = a 2'-deoxyribonucleoside 5'-phosphate + diphosphate + H(+). Functionally, nucleoside triphosphate pyrophosphatase. May have a dual role in cell division arrest and in preventing the incorporation of modified nucleotides into cellular nucleic acids. This is Nucleoside triphosphate pyrophosphatase (yhdE) from Shigella flexneri.